Consider the following 241-residue polypeptide: MSMLFYTLITAFLIGVQAEPYTDSNVPEGDSVPEAHWTKLQHSLDTALRRARSAPTAPIAARVTGQTRNITVDPRLFKKRRLHSPRVLFSTQPPPTSSDTLDLDFQAHGTIPFNRTHRSKRSSTHPVFHMGEFSVCDSVSVWVGDKTTATDIKGKEVTVLAEVNINNSVFRQYFFETKCRASNPVESGCRGIDSKHWNSYCTTTHTFVKALTTDEKQAAWRFIRIDTACVCVLSRKATRRG.

The N-terminal stretch at 1–18 (MSMLFYTLITAFLIGVQA) is a signal peptide. A propeptide spanning residues 19 to 121 (EPYTDSNVPE…PFNRTHRSKR (103 aa)) is cleaved from the precursor. N-linked (GlcNAc...) asparagine glycans are attached at residues Asn69 and Asn114. 3 disulfides stabilise this stretch: Cys136/Cys201, Cys179/Cys229, and Cys189/Cys231. Positions 171, 173, and 209 each coordinate a 1-acyl-sn-glycero-3-phospho-(1D-myo-inositol). A 1-acyl-sn-glycero-3-phospho-L-serine is bound at residue Arg171. An a 1-acyl-sn-glycero-3-phospho-L-serine-binding site is contributed by Lys209.

Belongs to the NGF-beta family. Homodimer. The homodimer interacts with a single NTRK1 chain. The homodimer interacts with a single NGFR chain. The NGF dimer interacts with a single SORCS2 chain (via extracellular domain). The NGF precursor (proNGF) binds to a receptor complex formed by SORT1 and NGFR, which leads to NGF endocytosis. Both mature NGF and the immature NGF precursor (proNGF) interact with SORCS2 and with the heterodimer formed by SORCS2 and NGFR (via extracellular domains). The NGF precursor (proNGF) has much higher affinity for SORCS2 than mature NGF. The NGF precursor (proNGF) has much higher affinity for SORT1 than mature NGF. Interacts with ADAM10 in a divalent cation-dependent manner. Interacts with SORCS3. Detected in submaxillary gland (at protein level). Highly expressed in male submaxillary gland. Levels are much lower in female submaxillary gland.

It is found in the secreted. The protein localises to the endosome lumen. Its function is as follows. Nerve growth factor is important for the development and maintenance of the sympathetic and sensory nervous systems. Extracellular ligand for the NTRK1 and NGFR receptors, activates cellular signaling cascades to regulate neuronal proliferation, differentiation and survival. The immature NGF precursor (proNGF) functions as a ligand for the heterodimeric receptor formed by SORCS2 and NGFR, and activates cellular signaling cascades that lead to inactivation of RAC1 and/or RAC2, reorganization of the actin cytoskeleton and neuronal growth cone collapse. In contrast to mature NGF, the precursor form (proNGF) promotes neuronal apoptosis (in vitro). Inhibits metalloproteinase-dependent proteolysis of platelet glycoprotein VI. Binds lysophosphatidylinositol and lysophosphatidylserine between the two chains of the homodimer. The lipid-bound form promotes histamine relase from mast cells, contrary to the lipid-free form. The chain is Beta-nerve growth factor (Ngf) from Mus musculus (Mouse).